The primary structure comprises 1411 residues: MSLSSGASGGKGVDANPVETYDSGDEWDIGVGNLIIDLDADLEKDQQKLEMSGSKEVGIPAPNAVATLPDNIKFVTPVPGPQGKEGKSKSKRSKSGKDTSKPTPGTSLFTPSEGAASKKEVQGRSGDGANAGGLVAAIAPKGSEKAAKASRSVAGSKKEKENSSSKSKKERSEGVGTCSEKDPGVLQPVPLGGRGGQYDGSAGVDTGAVEPLGSIAIEPGAALNPLGTKPEPEEGENECRLLKKVKSEKMESPVSTPAVLPIHLLVPVVNNDISSPCEQIMVRTRSVGVNTCDVALATEPECLGPCEPGTSVNLEGIVWQETEDGMLVVNVTWRNKTYVGTLLDCTRHDWAPPRFCDSPTSDLEMRNGRGRGKRMRPNSNTPVNETATASDSKGTSNSSKTRAGANSKGRRGSQNSSEHRPPASSTSEDVKASPSSANKRKNKPLSDMELNSSSEDSKGSKRVRTNSMGSATGPLPGTKVEPTVLDRNCPSPVLIDCPHPNCNKKYKHINGLKYHQAHAHTDDDSKPEADGDSEYGEEPILHADLGSCNGASVSQKGSLSPARSATPKVRLVEPHSPSPSSKFSTKGLCKKKLSGEGDTDLGALSNDGSDDGPSVMDETSNDAFDSLERKCMEKEKCKKPSSLKPEKIPSKSLKSARPIAPAIPPQQIYTFQTATFTAASPGSSSGLTATVAQAMPNSPQLKPIQPKPTVMGEPFTVNPALTPAKDKKKKDKKKKESSKELESPLTPGKVCRAEEGKSPFRESSGDGMKMEGLLNGSSDPHQSRLASIKAEADKIYSFTDNAPSPSIGGSSRLENTTPTQPLTPLHVVTQNGAEASSVKTNSPAYSDISDAGEDGEGKVDSVKSKDAEQLVKEGAKKTLFPPQPQSKDSPYYQGFESYYSPSYAQSSPGALNPSSQAGVESQALKTKRDEEPESIEGKVKNDICEEKKPELSSSSQQPSVIQQRPNMYMQSLYYNQYAYVPPYGYSDQSYHTHLLSTNTAYRQQYEEQQKRQSLEQQQRGVDKKAEMGLKEREAALKEEWKQKPSIPPTLTKAPSLTDLVKSGPGKAKEPGADPAKSVIIPKLDDSSKLPGQAPEGLKVKLSDASHLSKEASEAKTGAECGRQAEMDPILWYRQEAEPRMWTYVYPAKYSDIKSEDERWKEERDRKLKEERSRSKDSVPKEDGKESTSSDCKLPTSEESRLGSKEPRPSVHVPVSSPLTQHQSYIPYMHGYSYSQSYDPNHPSYRSMPAVMMQNYPGSYLPSSYSFSPYGSKVSGGEDADKARASPSVTCKSSSESKALDILQQHASHYKSKSPTISDKTSQERDRGGCGVVGGGGSCSSVGGASGGERSVDRPRTSPSQRLMSTHHHHHHLGYSLLPAQYNLPYAAGLSSTAIVASQQGSTPSLYPPPRR.

Disordered stretches follow at residues 1–26 (MSLSSGASGGKGVDANPVETYDSGDE), 47–190 (QKLE…QPVP), 353–484 (PRFC…EPTV), 517–659 (AHAH…ARPI), 679–963 (ASPG…VIQQ), 1005–1125 (YEEQ…RQAE), 1153–1221 (KSED…LTQH), and 1270–1367 (GSKV…STHH). Ser358, Ser361, and Ser379 each carry phosphoserine. A compositionally biased stretch (polar residues) spans 377 to 401 (PNSNTPVNETATASDSKGTSNSSKT). Residue Thr381 is modified to Phosphothreonine. 6 positions are modified to phosphoserine: Ser413, Ser433, Ser446, Ser452, Ser467, and Ser470. Positions 423–437 (ASSTSEDVKASPSSA) are enriched in polar residues. Residue Lys479 forms a Glycyl lysine isopeptide (Lys-Gly) (interchain with G-Cter in SUMO2) linkage. Residues 495–520 (IDCPHPNCNKKYKHINGLKYHQAHAH) form a C2H2-type zinc finger. Over residues 519 to 529 (AHTDDDSKPEA) the composition is skewed to basic and acidic residues. Phosphoserine is present on Ser533. Polar residues predominate over residues 549–563 (NGASVSQKGSLSPAR). A phosphoserine mark is found at Ser576 and Ser578. Residues 626–649 (SLERKCMEKEKCKKPSSLKPEKIP) show a composition bias toward basic and acidic residues. The segment covering 679 to 700 (ASPGSSSGLTATVAQAMPNSPQ) has biased composition (polar residues). Basic residues predominate over residues 726–736 (DKKKKDKKKKE). The residue at position 743 (Ser743) is a Phosphoserine. Position 746 is a phosphothreonine (Thr746). A compositionally biased stretch (basic and acidic residues) spans 751-764 (CRAEEGKSPFRESS). Ser758 carries the phosphoserine modification. Lys789 is covalently cross-linked (Glycyl lysine isopeptide (Lys-Gly) (interchain with G-Cter in SUMO2)). Residues 798-844 (FTDNAPSPSIGGSSRLENTTPTQPLTPLHVVTQNGAEASSVKTNSPA) are compositionally biased toward polar residues. Ser804 carries the phosphoserine modification. Thr823 carries the post-translational modification Phosphothreonine. 3 positions are modified to phosphoserine: Ser842, Ser846, and Ser849. Positions 855-876 (GEGKVDSVKSKDAEQLVKEGAK) are enriched in basic and acidic residues. The span at 897 to 908 (SYYSPSYAQSSP) shows a compositional bias: low complexity. Over residues 926-950 (TKRDEEPESIEGKVKNDICEEKKPE) the composition is skewed to basic and acidic residues. A compositionally biased stretch (low complexity) spans 952-963 (SSSSQQPSVIQQ). Residues 1020–1042 (GVDKKAEMGLKEREAALKEEWKQ) show a composition bias toward basic and acidic residues. Phosphoserine is present on Ser1055. A Glycyl lysine isopeptide (Lys-Gly) (interchain with G-Cter in SUMO2) cross-link involves residue Lys1061. Composition is skewed to basic and acidic residues over residues 1097 to 1113 (LKVKLSDASHLSKEASE), 1153 to 1187 (KSEDERWKEERDRKLKEERSRSKDSVPKEDGKEST), and 1195 to 1208 (TSEESRLGSKEPRP). A Glycyl lysine isopeptide (Lys-Gly) (interchain with G-Cter in SUMO2) cross-link involves residue Lys1153. Polar residues predominate over residues 1286-1296 (PSVTCKSSSES). Lys1297 is covalently cross-linked (Glycyl lysine isopeptide (Lys-Gly) (interchain with G-Cter in SUMO2)). Residues 1328 to 1337 (GCGVVGGGGS) show a composition bias toward gly residues.

As to quaternary structure, interacts (via N-terminus) with NIPBL. Interacts with INTS13; promoting association with the integrator complex. In terms of tissue distribution, isoform 1: Expressed in myoblasts and myotubes. Isoform 2: Expressed in myoblasts and myotubes, with a preference in undifferentiated myoblasts.

It is found in the nucleus. Functionally, transcription factor, which activates RAG1, and possibly RAG2, transcription. Through the regulation of RAG1/2 expression, may regulate thymocyte maturation. Along with NIPBL and the multiprotein complex Integrator, promotes cortical neuron migration during brain development by regulating the transcription of crucial genes in this process. Preferentially binds promoters containing paused RNA polymerase II. Up-regulates the expression of SEMA3A, NRP1, PLXND1 and GABBR2 genes, among others. Involved in the regulation of myoblast proliferation during myogenesis. The polypeptide is Zinc finger protein 609 (Homo sapiens (Human)).